Reading from the N-terminus, the 222-residue chain is PKHD-type hydroxylase PCC8801_2196 (222 aa).

Residues 78 to 175 (RIHSLLFSRY…RLVVVGWIES (98 aa)) enclose the Fe2OG dioxygenase domain. The Fe cation site is built by H96, D98, and H156. Position 166 (R166) interacts with 2-oxoglutarate.

It depends on Fe(2+) as a cofactor. The cofactor is L-ascorbate.

The polypeptide is PKHD-type hydroxylase PCC8801_2196 (Rippkaea orientalis (strain PCC 8801 / RF-1) (Cyanothece sp. (strain PCC 8801))).